The sequence spans 76 residues: Exodeoxyribonuclease 7 small subunit (76 aa).

The protein belongs to the XseB family. In terms of assembly, heterooligomer composed of large and small subunits.

It localises to the cytoplasm. The catalysed reaction is Exonucleolytic cleavage in either 5'- to 3'- or 3'- to 5'-direction to yield nucleoside 5'-phosphates.. Functionally, bidirectionally degrades single-stranded DNA into large acid-insoluble oligonucleotides, which are then degraded further into small acid-soluble oligonucleotides. The protein is Exodeoxyribonuclease 7 small subunit of Staphylococcus aureus (strain MRSA252).